Here is a 150-residue protein sequence, read N- to C-terminus: UPF0735 ACT domain-containing protein Csac_0995 (150 aa).

Positions 72–147 constitute an ACT domain; that stretch reads TLALVLQDVP…GVKKIEILGR (76 aa).

The protein belongs to the UPF0735 family.

In Caldicellulosiruptor saccharolyticus (strain ATCC 43494 / DSM 8903 / Tp8T 6331), this protein is UPF0735 ACT domain-containing protein Csac_0995.